We begin with the raw amino-acid sequence, 74 residues long: Defensin-like protein P322 (74 aa).

The first 19 residues, 1–19, serve as a signal peptide directing secretion; sequence MRFFATFFLLAMLVVATKM. Intrachain disulfides connect Cys-30-Cys-74, Cys-41-Cys-61, Cys-47-Cys-68, and Cys-51-Cys-70.

The protein belongs to the DEFL family. Protease inhibitor I18 (RTI/MTI-2) subfamily. As to expression, tuber.

It localises to the secreted. The chain is Defensin-like protein P322 from Solanum tuberosum (Potato).